We begin with the raw amino-acid sequence, 563 residues long: BOS complex subunit NCLN (563 aa).

An N-terminal signal peptide occupies residues 1–42; the sequence is MLEEAGEVLENMLKASCLPLGFIVFLPAVLLLVAPPLPAADA. Over 43 to 522 the chain is Lumenal; sequence AHEFTVYRMQ…VMNAYRVKPA (480 aa). Asn-241 and Asn-428 each carry an N-linked (GlcNAc...) asparagine glycan. Residues 523–543 traverse the membrane as a helical segment; the sequence is IFDLLLAVCIGAYLGMAYTAV. Residues 544-563 lie on the Cytoplasmic side of the membrane; that stretch reads QHFDLLYKTVQRLLVKAKTQ.

It belongs to the nicastrin family. Component of the back of Sec61 (BOS) complex, composed of NCLN/Nicalin, NOMO1 and TMEM147. The BOS complex is part of the multi-pass translocon (MPT) complex, composed of three subcomplexes, the GEL complex (composed of RAB5IF/OPTI and TMCO1), the BOS complex (composed of NCLN/Nicalin, NOMO1 and TMEM147) and the PAT complex (composed of WDR83OS/Asterix and CCDC47). The MPT complex associates with the SEC61 complex.

The protein localises to the endoplasmic reticulum membrane. Functionally, component of the multi-pass translocon (MPT) complex that mediates insertion of multi-pass membrane proteins into the lipid bilayer of membranes. The MPT complex takes over after the SEC61 complex: following membrane insertion of the first few transmembrane segments of proteins by the SEC61 complex, the MPT complex occludes the lateral gate of the SEC61 complex to promote insertion of subsequent transmembrane regions. May antagonize Nodal signaling and subsequent organization of axial structures during mesodermal patterning, via its interaction with NOMO. This is BOS complex subunit NCLN from Canis lupus familiaris (Dog).